The sequence spans 299 residues: Pectin lyase (299 aa).

Residues Met-1–Ala-18 form the signal peptide. 2 stretches are compositionally biased toward low complexity: residues Arg-82 to Asp-91 and Ser-232 to Thr-246. 2 disordered regions span residues Arg-82–Ser-105 and Ser-227–Thr-246.

Belongs to the polysaccharide lyase 1 family.

Its subcellular location is the secreted. It catalyses the reaction Eliminative cleavage of (1-&gt;4)-alpha-D-galacturonan methyl ester to give oligosaccharides with 4-deoxy-6-O-methyl-alpha-D-galact-4-enuronosyl groups at their non-reducing ends.. This chain is Pectin lyase (PELA), found in Peyronellaea pinodes (Pea foot rot fungus).